A 283-amino-acid polypeptide reads, in one-letter code: Pantothenate synthetase (283 aa).

30 to 37 is an ATP binding site; sequence MGALHEGH. Residue His37 is the Proton donor of the active site. Gln61 is a binding site for (R)-pantoate. Gln61 provides a ligand contact to beta-alanine. ATP is bound at residue 147–150; that stretch reads GEKD. Gln153 is a (R)-pantoate binding site. Residues Ile176 and 184-187 contribute to the ATP site; that span reads VSSR.

The protein belongs to the pantothenate synthetase family. As to quaternary structure, homodimer.

It localises to the cytoplasm. It carries out the reaction (R)-pantoate + beta-alanine + ATP = (R)-pantothenate + AMP + diphosphate + H(+). Its pathway is cofactor biosynthesis; (R)-pantothenate biosynthesis; (R)-pantothenate from (R)-pantoate and beta-alanine: step 1/1. Catalyzes the condensation of pantoate with beta-alanine in an ATP-dependent reaction via a pantoyl-adenylate intermediate. This chain is Pantothenate synthetase, found in Pelodictyon phaeoclathratiforme (strain DSM 5477 / BU-1).